The primary structure comprises 305 residues: MIRQRTLKEIVKTTGVGLHSGRKVTLTLRPAAANTGIIYRRTDLTPAVDFPADPASVRDTMLCTALVNDEGVRISTVEHLNAALAGMGIDNIIIEVDAPEIPIMDGSASPFVYLLQQAGIETQNAAKRFIRIKKPVRFEDGDKWAEFVPFNGFRMDFEIEFNHPAIDSDEQRLLFDFSTQGFVREISRARTFGFMRDIEYLQSQNLVLGGSFDNAIVLDDYRILNEEGLRFENEFVTHKVLDAIGDLYMCGHAIIGEFRAYKSGHGLNNQLLRAVLADQEAWEWTTFEEEVGSPVAFAEPNMVLA.

Residues His79, His238, and Asp242 each contribute to the Zn(2+) site. His265 (proton donor) is an active-site residue.

This sequence belongs to the LpxC family. Zn(2+) serves as cofactor.

It catalyses the reaction a UDP-3-O-[(3R)-3-hydroxyacyl]-N-acetyl-alpha-D-glucosamine + H2O = a UDP-3-O-[(3R)-3-hydroxyacyl]-alpha-D-glucosamine + acetate. It functions in the pathway glycolipid biosynthesis; lipid IV(A) biosynthesis; lipid IV(A) from (3R)-3-hydroxytetradecanoyl-[acyl-carrier-protein] and UDP-N-acetyl-alpha-D-glucosamine: step 2/6. Catalyzes the hydrolysis of UDP-3-O-myristoyl-N-acetylglucosamine to form UDP-3-O-myristoylglucosamine and acetate, the committed step in lipid A biosynthesis. This is UDP-3-O-acyl-N-acetylglucosamine deacetylase from Vibrio vulnificus (strain CMCP6).